Here is a 242-residue protein sequence, read N- to C-terminus: GDSL esterase/lipase At5g62930 (242 aa).

Serine 11 acts as the Nucleophile in catalysis. Residues 223-242 (PHHSHIDGKNPSKAFEERCL) form a disordered region.

It belongs to the 'GDSL' lipolytic enzyme family.

In Arabidopsis thaliana (Mouse-ear cress), this protein is GDSL esterase/lipase At5g62930.